The sequence spans 382 residues: Gap junction alpha-1 protein (382 aa).

Over 2 to 23 (GDWSALGKLLDKVQAYSTAGGK) the chain is Cytoplasmic. The residue at position 5 (Ser5) is a Phosphoserine. Residues 24-44 (VWLSVLFIFRILLLGTAVESA) traverse the membrane as a helical segment. The Extracellular portion of the chain corresponds to 45 to 76 (WGDEQSAFRCNTQQPGCENVCYDKSFPISHVR). Disulfide bonds link Cys54–Cys192 and Cys187–Cys198. The chain crosses the membrane as a helical span at residues 77–97 (FWVLQIIFVSVPTLLYLAHVF). The Cytoplasmic portion of the chain corresponds to 98 to 155 (YVMRKEEKLNKKEEELKVAQTDGVNVEMHLKQIEIKKFKYGIEEHGKVKMRGGLLRTY). Lys144 is covalently cross-linked (Glycyl lysine isopeptide (Lys-Gly) (interchain with G-Cter in SUMO)). A helical membrane pass occupies residues 156–176 (IISILFKSVFEVAFLLIQWYI). Topologically, residues 177–207 (YGFSLSAVYTCKRDPCPHQVDCFLSRPTEKT) are extracellular. Residues 208–228 (IFIIFMLVVSLVSLALNIIEL) traverse the membrane as a helical segment. Topologically, residues 229 to 382 (FYVFFKGVKD…SRPRPDDLEI (154 aa)) are cytoplasmic. Lys237 is covalently cross-linked (Glycyl lysine isopeptide (Lys-Gly) (interchain with G-Cter in SUMO)). Positions 244-382 (SDPYHATTGP…SRPRPDDLEI (139 aa)) are interaction with NOV. Tyr247 is subject to Phosphotyrosine. Phosphoserine occurs at positions 255, 257, and 262. An interaction with UBQLN4 region spans residues 264-382 (KYAYFNGCSS…SRPRPDDLEI (119 aa)). At Cys271 the chain carries S-nitrosocysteine. The residue at position 275 (Thr275) is a Phosphothreonine. A phosphoserine mark is found at Ser306, Ser314, and Ser325. The segment covering 317–332 (QNRMGQAGSTISNSHA) has biased composition (polar residues). Residues 317–382 (QNRMGQAGST…SRPRPDDLEI (66 aa)) are disordered. At Thr326 the chain carries Phosphothreonine. Phosphoserine is present on residues Ser328, Ser330, Ser341, and Ser365. A compositionally biased stretch (low complexity) spans 362-374 (RPSSRASSRASSR). Ser368 bears the Phosphoserine; by PKC/PRKCG and PKC/PRKCD mark. Residues Ser369 and Ser373 each carry the phosphoserine modification.

This sequence belongs to the connexin family. Alpha-type (group II) subfamily. As to quaternary structure, a connexon is composed of a hexamer of connexins. Interacts with CSNK1D. Interacts with RIC1/CIP150. Interacts (via C-terminus) with TJP1. Interacts (via C-terminus) with SRC (via SH3 domain). Interacts (not ubiquitinated) with UBQLN4 (via UBA domain). Interacts with CNST. Interacts with SGSM3. Interacts with NOV. Interacts with TMEM65. Interacts with ANK3/ANKG and PKP2. Post-translationally, phosphorylation at Ser-325, Ser-328 and Ser-330 by CK1 modulates gap junction assembly. Phosphorylated at Ser-368 by PRKCG; phosphorylation induces disassembly of gap junction plaques and inhibition of gap junction activity. Phosphorylation at Ser-368 by PRKCD triggers its internalization into small vesicles leading to proteasome-mediated degradation. Sumoylated with SUMO1, SUMO2 and SUMO3, which may regulate the level of functional Cx43 gap junctions at the plasma membrane. May be desumoylated by SENP1 or SENP2. In terms of processing, acetylated in the developing cortex; leading to delocalization from the cell membrane. Post-translationally, S-nitrosylation at Cys-271 is enriched at the muscle endothelial gap junction in arteries, it augments channel permeability and may regulate of smooth muscle cell to endothelial cell communication. As to expression, expressed in heart, non-sensory epithelial cells, and in fibrocytes of the spiral ligament and the spiral limbus. Expressed in bladder smooth muscle cells (at protein level). Expressed in astrocytes (at protein level).

Its subcellular location is the cell membrane. It localises to the cell junction. The protein resides in the gap junction. The protein localises to the endoplasmic reticulum. Its function is as follows. Gap junction protein that acts as a regulator of bladder capacity. A gap junction consists of a cluster of closely packed pairs of transmembrane channels, the connexons, through which materials of low MW diffuse from one cell to a neighboring cell. Negative regulator of bladder functional capacity: acts by enhancing intercellular electrical and chemical transmission, thus sensitizing bladder muscles to cholinergic neural stimuli and causing them to contract. May play a role in cell growth inhibition through the regulation of NOV expression and localization. Plays an essential role in gap junction communication in the ventricles. Connexin 43 is possibly the ATP-induced pore of mouse macrophages. The chain is Gap junction alpha-1 protein (Gja1) from Mus musculus (Mouse).